We begin with the raw amino-acid sequence, 165 residues long: GTP-dependent dephospho-CoA kinase (165 aa).

GTP contacts are provided by Asp-44, Val-45, Asp-63, Lys-65, Glu-115, and Asp-138.

Belongs to the GTP-dependent DPCK family.

The enzyme catalyses 3'-dephospho-CoA + GTP = GDP + CoA + H(+). Its pathway is cofactor biosynthesis; coenzyme A biosynthesis. In terms of biological role, catalyzes the GTP-dependent phosphorylation of the 3'-hydroxyl group of dephosphocoenzyme A to form coenzyme A (CoA). This Picrophilus torridus (strain ATCC 700027 / DSM 9790 / JCM 10055 / NBRC 100828 / KAW 2/3) protein is GTP-dependent dephospho-CoA kinase.